Reading from the N-terminus, the 130-residue chain is Anti-adapter protein IraD (130 aa).

Belongs to the GpW/Gp25 family. IraD subfamily. Interacts with RssB.

Its subcellular location is the cytoplasm. Its function is as follows. Inhibits RpoS proteolysis by regulating RssB activity, thereby increasing the stability of the sigma stress factor RpoS during oxidative stress. Its effect on RpoS stability is due to its interaction with RssB, which probably blocks the interaction of RssB with RpoS, and the consequent delivery of the RssB-RpoS complex to the ClpXP protein degradation pathway. The sequence is that of Anti-adapter protein IraD from Escherichia coli (strain K12 / MC4100 / BW2952).